A 162-amino-acid chain; its full sequence is Small ribosomal subunit protein uS12m (162 aa).

A mitochondrion-targeting transit peptide spans 1–37 (MIRFAQYARYPVISRLMKPTVISPFQAQAFSSSSVML).

It belongs to the universal ribosomal protein uS12 family. In terms of assembly, component of the mitochondrial small ribosomal subunit (mt-SSU). Mature yeast 74S mitochondrial ribosomes consist of a small (37S) and a large (54S) subunit. The 37S small subunit contains a 15S ribosomal RNA (15S mt-rRNA) and at least 32 different proteins. The 54S large subunit contains a 21S rRNA (21S mt-rRNA) and at least 45 different proteins. uS12m forms part of the decoding center of the mt-SSU.

It is found in the mitochondrion. Component of the mitochondrial ribosome (mitoribosome), a dedicated translation machinery responsible for the synthesis of mitochondrial genome-encoded proteins, including at least some of the essential transmembrane subunits of the mitochondrial respiratory chain. The mitoribosomes are attached to the mitochondrial inner membrane and translation products are cotranslationally integrated into the membrane. uS12m is required for respiratory growth. The sequence is that of Small ribosomal subunit protein uS12m from Schizosaccharomyces pombe (strain 972 / ATCC 24843) (Fission yeast).